We begin with the raw amino-acid sequence, 419 residues long: MSHWQQITGGVTAAKGYRAAGITAGLKASGAPDLALIVSDVPAIAAGVFTTNHMCAAPVRYCRQRLQTKGTAQAILCNSGQANAATGEQGWQAVLAQADMVATALGFSPEMVLVASTGVIGQPIPLEKMRQALPTLTANLSDGGGEAAARAIMTTDLVPKQIALEAEWEGQTIRIGGMAKGSGMIHPKMATMLAFITCDAAVSPHLWQEMLQRACDRSFNQITVDGDTSTNDSVIALANGQSRTPAIAEPGAAATRLEEMLTAVCVHLAKAIARDGEGATCLIEVQVSGASDDTAARQVARTIASSMLVKSAIYGRDPNWGRIAAAAGRAGVPFDASNLAIALGGIPMMRHGQPLPFDPAAAHAYLVQQAAASTDASGQQSIDHPVVIEVSIGSGSGRGVAWGCDLSYDYVKINAEYTT.

Thr154, Lys180, Thr191, Glu277, Asn414, and Thr419 together coordinate substrate. The Nucleophile role is filled by Thr191.

Belongs to the ArgJ family. As to quaternary structure, heterotetramer of two alpha and two beta chains.

Its subcellular location is the cytoplasm. The enzyme catalyses N(2)-acetyl-L-ornithine + L-glutamate = N-acetyl-L-glutamate + L-ornithine. It catalyses the reaction L-glutamate + acetyl-CoA = N-acetyl-L-glutamate + CoA + H(+). It functions in the pathway amino-acid biosynthesis; L-arginine biosynthesis; L-ornithine and N-acetyl-L-glutamate from L-glutamate and N(2)-acetyl-L-ornithine (cyclic): step 1/1. The protein operates within amino-acid biosynthesis; L-arginine biosynthesis; N(2)-acetyl-L-ornithine from L-glutamate: step 1/4. In terms of biological role, catalyzes two activities which are involved in the cyclic version of arginine biosynthesis: the synthesis of N-acetylglutamate from glutamate and acetyl-CoA as the acetyl donor, and of ornithine by transacetylation between N(2)-acetylornithine and glutamate. The chain is Arginine biosynthesis bifunctional protein ArgJ from Thermosynechococcus vestitus (strain NIES-2133 / IAM M-273 / BP-1).